The sequence spans 207 residues: Large ribosomal subunit protein uL4 (207 aa).

The disordered stretch occupies residues 48-70 (KAQKTRSEVSGGGAKPWRQKGTG).

The protein belongs to the universal ribosomal protein uL4 family. Part of the 50S ribosomal subunit.

One of the primary rRNA binding proteins, this protein initially binds near the 5'-end of the 23S rRNA. It is important during the early stages of 50S assembly. It makes multiple contacts with different domains of the 23S rRNA in the assembled 50S subunit and ribosome. Functionally, forms part of the polypeptide exit tunnel. The chain is Large ribosomal subunit protein uL4 from Francisella tularensis subsp. holarctica (strain FTNF002-00 / FTA).